We begin with the raw amino-acid sequence, 119 residues long: Ribonuclease P protein component (119 aa).

It belongs to the RnpA family. As to quaternary structure, consists of a catalytic RNA component (M1 or rnpB) and a protein subunit.

The enzyme catalyses Endonucleolytic cleavage of RNA, removing 5'-extranucleotides from tRNA precursor.. Functionally, RNaseP catalyzes the removal of the 5'-leader sequence from pre-tRNA to produce the mature 5'-terminus. It can also cleave other RNA substrates such as 4.5S RNA. The protein component plays an auxiliary but essential role in vivo by binding to the 5'-leader sequence and broadening the substrate specificity of the ribozyme. This chain is Ribonuclease P protein component, found in Halalkalibacterium halodurans (strain ATCC BAA-125 / DSM 18197 / FERM 7344 / JCM 9153 / C-125) (Bacillus halodurans).